The following is a 213-amino-acid chain: Na(+)-translocating NADH-quinone reductase subunit E (213 aa).

6 helical membrane passes run 12–32, 40–60, 92–112, 124–144, 155–175, and 191–211; these read AVFV…FLAV, IGLG…NQLI, FLGF…LEMF, LGIF…SLFM, VVFG…LAGI, and LGIT…FSGI.

This sequence belongs to the NqrDE/RnfAE family. In terms of assembly, composed of six subunits; NqrA, NqrB, NqrC, NqrD, NqrE and NqrF.

It is found in the cell inner membrane. It catalyses the reaction a ubiquinone + n Na(+)(in) + NADH + H(+) = a ubiquinol + n Na(+)(out) + NAD(+). Its function is as follows. NQR complex catalyzes the reduction of ubiquinone-1 to ubiquinol by two successive reactions, coupled with the transport of Na(+) ions from the cytoplasm to the periplasm. NqrA to NqrE are probably involved in the second step, the conversion of ubisemiquinone to ubiquinol. This chain is Na(+)-translocating NADH-quinone reductase subunit E, found in Rhodopirellula baltica (strain DSM 10527 / NCIMB 13988 / SH1).